A 311-amino-acid polypeptide reads, in one-letter code: tRNA-cytidine(32) 2-sulfurtransferase (311 aa).

A PP-loop motif motif is present at residues 47-52 (SGGKDS). Residues C122, C125, and C213 each coordinate [4Fe-4S] cluster.

This sequence belongs to the TtcA family. In terms of assembly, homodimer. Mg(2+) is required as a cofactor. [4Fe-4S] cluster serves as cofactor.

It localises to the cytoplasm. The enzyme catalyses cytidine(32) in tRNA + S-sulfanyl-L-cysteinyl-[cysteine desulfurase] + AH2 + ATP = 2-thiocytidine(32) in tRNA + L-cysteinyl-[cysteine desulfurase] + A + AMP + diphosphate + H(+). It participates in tRNA modification. Its function is as follows. Catalyzes the ATP-dependent 2-thiolation of cytidine in position 32 of tRNA, to form 2-thiocytidine (s(2)C32). The sulfur atoms are provided by the cysteine/cysteine desulfurase (IscS) system. This is tRNA-cytidine(32) 2-sulfurtransferase from Escherichia coli (strain SMS-3-5 / SECEC).